Here is a 186-residue protein sequence, read N- to C-terminus: Testis-expressed protein 36 (186 aa).

The interval 1-52 (MTKGRRFNPPSDKDGRWFPHIGLTQKTPESITSATSKEPQSPHLPRQAEGKL) is disordered. Residues 24–39 (TQKTPESITSATSKEP) show a composition bias toward polar residues.

This is Testis-expressed protein 36 (TEX36) from Homo sapiens (Human).